The sequence spans 398 residues: Acetate kinase 1 (398 aa).

Asn-9 is a binding site for Mg(2+). ATP is bound at residue Lys-16. Arg-89 contacts substrate. Catalysis depends on Asp-146, which acts as the Proton donor/acceptor. Residues 206–210 (HLGNG), 281–283 (DCR), and 329–333 (GIGEN) contribute to the ATP site. Glu-384 is a Mg(2+) binding site.

The protein belongs to the acetokinase family. As to quaternary structure, homodimer. It depends on Mg(2+) as a cofactor. The cofactor is Mn(2+).

It is found in the cytoplasm. It carries out the reaction acetate + ATP = acetyl phosphate + ADP. It participates in metabolic intermediate biosynthesis; acetyl-CoA biosynthesis; acetyl-CoA from acetate: step 1/2. Functionally, catalyzes the formation of acetyl phosphate from acetate and ATP. Can also catalyze the reverse reaction. In Photobacterium profundum (strain SS9), this protein is Acetate kinase 1.